A 199-amino-acid chain; its full sequence is MNIRSLERAGRAGKQDGVAVSPGQEEEVQNCVSTHDSNWPVIKDHSVKLHRVSPLLLQCRITHSSRWIAQVLASELSLLAFILLVVMVFSKKWLCFERIRFYQHWTMNVTTKIYTSVHIMSLGLLHIYKSKSYSNSEWESFKLWTNHPAFGVAKITFCLALGLGIILTIWLHLPYIPGLQKLPFFGWIGTVMSFCEGAL.

Residues 1–14 (MNIRSLERAGRAGK) show a composition bias toward basic and acidic residues. Residues 1 to 25 (MNIRSLERAGRAGKQDGVAVSPGQE) form a disordered region. S53 carries the post-translational modification Phosphoserine. The next 3 helical transmembrane spans lie at 68 to 88 (IAQVLASELSLLAFILLVVMV), 109 to 128 (VTTKIYTSVHIMSLGLLHIY), and 159 to 179 (LALGLGIILTIWLHLPYIPGL).

The protein localises to the membrane. Functionally, component of the outer dense fibers (ODF) of spermatozoa which could be involved in sperm tail structure, sperm movement and general organization of cellular cytoskeleton. In Bos taurus (Bovine), this protein is Outer dense fiber protein 4 (ODF4).